Here is a 512-residue protein sequence, read N- to C-terminus: Maturase K (512 aa).

It belongs to the intron maturase 2 family. MatK subfamily.

It is found in the plastid. Its subcellular location is the chloroplast. Its function is as follows. Usually encoded in the trnK tRNA gene intron. Probably assists in splicing its own and other chloroplast group II introns. The sequence is that of Maturase K from Lilium canadense (Canada lily).